The primary structure comprises 317 residues: Beta-ketoacyl-[acyl-carrier-protein] synthase III (317 aa).

Catalysis depends on residues C112 and H244. The tract at residues 245–249 is ACP-binding; sequence QANVR. The active site involves N274.

Belongs to the thiolase-like superfamily. FabH family. As to quaternary structure, homodimer.

Its subcellular location is the cytoplasm. The catalysed reaction is malonyl-[ACP] + acetyl-CoA + H(+) = 3-oxobutanoyl-[ACP] + CO2 + CoA. It functions in the pathway lipid metabolism; fatty acid biosynthesis. Catalyzes the condensation reaction of fatty acid synthesis by the addition to an acyl acceptor of two carbons from malonyl-ACP. Catalyzes the first condensation reaction which initiates fatty acid synthesis and may therefore play a role in governing the total rate of fatty acid production. Possesses both acetoacetyl-ACP synthase and acetyl transacylase activities. Its substrate specificity determines the biosynthesis of branched-chain and/or straight-chain of fatty acids. This Rickettsia canadensis (strain McKiel) protein is Beta-ketoacyl-[acyl-carrier-protein] synthase III.